Consider the following 411-residue polypeptide: Translation initiation factor 2 subunit gamma (411 aa).

Residues 9–203 (QAEVNIGMVG…AIEDFIPTPK (195 aa)) enclose the tr-type G domain. Residues 18–25 (GHVDHGKT) are G1. Residues Asp-21, Thr-25, Gly-46, and Thr-48 each coordinate Mg(2+). 21–26 (DHGKTT) is a GTP binding site. The tract at residues 46-50 (GITIK) is G2. Cys-61, Cys-64, Cys-73, and Cys-76 together coordinate Zn(2+). The interval 90 to 93 (DAPG) is G3. GTP-binding positions include 146 to 149 (NKIE) and 181 to 183 (SAL). The tract at residues 146–149 (NKIE) is G4. The G5 stretch occupies residues 181–183 (SAL).

The protein belongs to the TRAFAC class translation factor GTPase superfamily. Classic translation factor GTPase family. EIF2G subfamily. Heterotrimer composed of an alpha, a beta and a gamma chain. The cofactor is Mg(2+).

The enzyme catalyses GTP + H2O = GDP + phosphate + H(+). EIF-2 functions in the early steps of protein synthesis by forming a ternary complex with GTP and initiator tRNA. The sequence is that of Translation initiation factor 2 subunit gamma from Pyrococcus abyssi (strain GE5 / Orsay).